A 67-amino-acid chain; its full sequence is Large ribosomal subunit protein bL35 (67 aa).

Belongs to the bacterial ribosomal protein bL35 family.

In Bartonella henselae (strain ATCC 49882 / DSM 28221 / CCUG 30454 / Houston 1) (Rochalimaea henselae), this protein is Large ribosomal subunit protein bL35.